The following is a 526-amino-acid chain: Protein DETOXIFICATION 43 (526 aa).

Residues 1–36 lie on the Cytoplasmic side of the membrane; it reads MTETGDDLATVKKPIPFLVIFKDLRHVFSRDTTGRE. The helical transmembrane segment at 37 to 57 threads the bilayer; it reads ILGIAFPAALALAADPIASLI. At 58–59 the chain is on the extracellular side; the sequence is DT. Residues 60–80 traverse the membrane as a helical segment; sequence AFVGRLGAVQLAAVGVSIAIF. The Cytoplasmic portion of the chain corresponds to 81 to 170; that stretch reads NQASRITIFP…NKKEKRTIRT (90 aa). The disordered stretch occupies residues 133–166; it reads ISSPTSNDTNQPQQPPAPDTKSNSGNKSNKKEKR. The segment covering 134-144 has biased composition (polar residues); the sequence is SSPTSNDTNQP. A helical membrane pass occupies residues 171-191; it reads ASTAMILGLILGLVQAIFLIF. Topologically, residues 192–215 are extracellular; that stretch reads SSKLLLGVMGVKPNSPMLSPAHKY. A helical transmembrane segment spans residues 216–236; it reads LSIRALGAPALLLSLAMQGIF. Residues 237–244 lie on the Cytoplasmic side of the membrane; the sequence is RGFKDTKT. A helical membrane pass occupies residues 245–267; that stretch reads PLFATVVADVINIVLDPIFIFVL. The Extracellular segment spans residues 268-270; that stretch reads RLG. Residues 271–293 traverse the membrane as a helical segment; the sequence is IIGAAIAHVISQYFMTLILFVFL. Residues 294–316 are Cytoplasmic-facing; that stretch reads AKKVNLIPPNFGDLQFGRFLKNG. A helical membrane pass occupies residues 317 to 337; the sequence is LLLLARTIAVTFCQTLAAAMA. Over 338–353 the chain is Extracellular; that stretch reads ARLGTTPMAAFQICLQ. Residues 354–374 traverse the membrane as a helical segment; that stretch reads VWLTSSLLNDGLAVAGQAILA. At 375 to 396 the chain is on the cytoplasmic side; the sequence is CSFAEKDYNKVTAVASRVLQMG. Residues 397–417 form a helical membrane-spanning segment; that stretch reads FVLGLGLSVFVGLGLYFGAGV. The Extracellular portion of the chain corresponds to 418–426; it reads FSKDPAVIH. A helical transmembrane segment spans residues 427-447; it reads LMAIGIPFIAATQPINSLAFV. At 448-457 the chain is on the cytoplasmic side; the sequence is LDGVNFGASD. A helical membrane pass occupies residues 458-478; sequence FAYTAYSMVGVAAISIAAVIY. Topologically, residues 479-484 are extracellular; it reads MAKTNG. The chain crosses the membrane as a helical span at residues 485–505; sequence FIGIWIALTIYMALRAITGIA. The Cytoplasmic segment spans residues 506–526; it reads RMATGTGPWRFLRGRSSSSSS.

It belongs to the multi antimicrobial extrusion (MATE) (TC 2.A.66.1) family. In terms of tissue distribution, expressed in roots in the pericycle and cells internal to the pericycle and surrounding the vascular tissue. Also expressed in seed and flower.

Its subcellular location is the cell membrane. In terms of biological role, citrate transporter responsible for loading citrate into xylem tissues, which helps facilitate iron transport to shoots. Mediates the citrate release in the apoplastic spaces during plant development allowing iron nutrition between symplastically disconnected tissues. The sequence is that of Protein DETOXIFICATION 43 from Arabidopsis thaliana (Mouse-ear cress).